Reading from the N-terminus, the 457-residue chain is Chromogranin-A (457 aa).

Positions 1-18 are cleaved as a signal peptide; that stretch reads MRSAAVLALLLCAGQVTA. The cysteines at positions 35 and 56 are disulfide-linked. The segment at 41–59 is O-glycosylated at one site only in cerebrospinal fluid; it reads SDTLSKPSPMPVSQECFET. The disordered stretch occupies residues 88-440; it reads KERAHQQKKH…DQELESLSAI (353 aa). Basic and acidic residues predominate over residues 116–144; sequence ELKEAVEEPSSKDVMEKREDSKEAEKSGE. The residue at position 142 (Ser142) is a Phosphoserine. The segment covering 171-180 has biased composition (acidic residues); sequence GEEEEEEEEA. 2 O-linked (GalNAc...) threonine glycosylation sites follow: Thr181 and Thr183. An O-glycosylated at one site only in cerebrospinal fluid region spans residues 181-191; sequence TNTHPPASLPS. A compositionally biased stretch (polar residues) spans 182–191; the sequence is NTHPPASLPS. Tyr194 carries the phosphotyrosine modification. Phosphoserine is present on residues Ser203 and Ser218. Residues 229 to 249 show a composition bias toward acidic residues; sequence EEEEEEEEAEAGEEAVPEEEG. Thr251 carries an O-linked (GalNAc...) threonine glycan. Composition is skewed to basic and acidic residues over residues 263-272 and 291-303; these read KEIRKGESRS and PEGKGEQEHSQQK. Ser270 and Ser300 each carry phosphoserine. A Glycine amide modification is found at Gly319. A phosphoserine mark is found at Ser322, Ser333, and Ser371. The span at 330 to 360 shows a compositional bias: basic and acidic residues; the sequence is ERLSKEWEDSKRWSKMDQLAKELTAEKRLEG. At Met372 the chain carries Methionine sulfoxide. 4 positions are modified to phosphoserine: Ser398, Ser402, Ser424, and Ser438. Positions 414-431 are enriched in basic and acidic residues; the sequence is YPEEKKEEEGSANRRPED. Residue Ser424 is glycosylated (O-linked (Xyl...) (chondroitin sulfate) serine). The residue at position 456 (Arg456) is an Arginine amide.

The protein belongs to the chromogranin/secretogranin protein family. As to quaternary structure, self-interacts; self-assembly is promoted in vitro by chondroitin sulfate attachment which occurs at mildly acidic pH conditions. Interacts with SCG3. Interacts with ITPR1 in the secretory granules. Post-translationally, sulfated on tyrosine residues and/or contains sulfated glycans. O-glycosylated with core 1 or possibly core 8 glycans. Contains chondroitin sulfate (CS); CS attachment is pH-dependent, being observed at mildly acidic conditions of pH 5 but not at neutral pH, and promotes self-assembly in vitro. In terms of processing, proteolytic processing gives rise to an additional longer form of catestatin (residues 358-390) which displays a less potent catecholamine release-inhibitory activity. Plasmin-mediated proteolytic processing can give rise to additional shorter and longer forms of catestatin peptides. As to expression, detected in cerebrospinal fluid (at protein level). Detected in urine (at protein level). Found in the brain.

It localises to the secreted. The protein resides in the cytoplasmic vesicle. It is found in the secretory vesicle. The protein localises to the neuronal dense core vesicle. In terms of biological role, strongly inhibits glucose induced insulin release from the pancreas. Its function is as follows. Inhibits catecholamine release from chromaffin cells and noradrenergic neurons by acting as a non-competitive nicotinic cholinergic antagonist. Displays antibacterial activity against Gram-positive bacteria S.aureus and M.luteus, and Gram-negative bacteria E.coli and P.aeruginosa. Can induce mast cell migration, degranulation and production of cytokines and chemokines. Acts as a potent scavenger of free radicals in vitro. May play a role in the regulation of cardiac function and blood pressure. Regulates granule biogenesis in endocrine cells by up-regulating the transcription of protease nexin 1 (SERPINE2) via a cAMP-PKA-SP1 pathway. This leads to inhibition of granule protein degradation in the Golgi complex which in turn promotes granule formation. In Homo sapiens (Human), this protein is Chromogranin-A (CHGA).